Consider the following 272-residue polypeptide: Undecaprenyl-diphosphatase (272 aa).

Transmembrane regions (helical) follow at residues 6-26 (SLLI…LPVS), 45-65 (AKTF…VMFW), 92-112 (THIL…HDVI), 115-135 (LFYP…LLAA), 189-209 (YAAS…ATVL), 225-245 (MFAV…KTFL), and 251-271 (ISFV…YMVF).

It belongs to the UppP family.

It localises to the cell inner membrane. The enzyme catalyses di-trans,octa-cis-undecaprenyl diphosphate + H2O = di-trans,octa-cis-undecaprenyl phosphate + phosphate + H(+). In terms of biological role, catalyzes the dephosphorylation of undecaprenyl diphosphate (UPP). Confers resistance to bacitracin. The chain is Undecaprenyl-diphosphatase from Pectobacterium carotovorum subsp. carotovorum (strain PC1).